We begin with the raw amino-acid sequence, 204 residues long: Proteasome subunit beta type-3-B (204 aa).

This sequence belongs to the peptidase T1B family. As to quaternary structure, component of the 20S core complex of the 26S proteasome. The 26S proteasome is composed of a core protease (CP), known as the 20S proteasome, capped at one or both ends by the 19S regulatory particle (RP/PA700). The 20S proteasome core is composed of 28 subunits that are arranged in four stacked rings, resulting in a barrel-shaped structure. The two end rings are each formed by seven alpha subunits, and the two central rings are each formed by seven beta subunits. The catalytic chamber with the active sites is on the inside of the barrel.

It localises to the cytoplasm. Its subcellular location is the nucleus. Its function is as follows. Non-catalytic component of the proteasome, a multicatalytic proteinase complex which is characterized by its ability to cleave peptides with Arg, Phe, Tyr, Leu, and Glu adjacent to the leaving group at neutral or slightly basic pH. The proteasome has an ATP-dependent proteolytic activity. The sequence is that of Proteasome subunit beta type-3-B (PBC2) from Arabidopsis thaliana (Mouse-ear cress).